Reading from the N-terminus, the 75-residue chain is Putative UPF0377 protein YAL067W-A (75 aa).

It belongs to the UPF0377 family.

The sequence is that of Putative UPF0377 protein YAL067W-A from Saccharomyces cerevisiae (strain ATCC 204508 / S288c) (Baker's yeast).